We begin with the raw amino-acid sequence, 174 residues long: Crossover junction endodeoxyribonuclease RuvC (174 aa).

Residues D8, E67, and D139 contribute to the active site. Positions 8, 67, and 139 each coordinate Mg(2+).

It belongs to the RuvC family. In terms of assembly, homodimer which binds Holliday junction (HJ) DNA. The HJ becomes 2-fold symmetrical on binding to RuvC with unstacked arms; it has a different conformation from HJ DNA in complex with RuvA. In the full resolvosome a probable DNA-RuvA(4)-RuvB(12)-RuvC(2) complex forms which resolves the HJ. Mg(2+) is required as a cofactor.

It is found in the cytoplasm. It catalyses the reaction Endonucleolytic cleavage at a junction such as a reciprocal single-stranded crossover between two homologous DNA duplexes (Holliday junction).. Its function is as follows. The RuvA-RuvB-RuvC complex processes Holliday junction (HJ) DNA during genetic recombination and DNA repair. Endonuclease that resolves HJ intermediates. Cleaves cruciform DNA by making single-stranded nicks across the HJ at symmetrical positions within the homologous arms, yielding a 5'-phosphate and a 3'-hydroxyl group; requires a central core of homology in the junction. The consensus cleavage sequence is 5'-(A/T)TT(C/G)-3'. Cleavage occurs on the 3'-side of the TT dinucleotide at the point of strand exchange. HJ branch migration catalyzed by RuvA-RuvB allows RuvC to scan DNA until it finds its consensus sequence, where it cleaves and resolves the cruciform DNA. The sequence is that of Crossover junction endodeoxyribonuclease RuvC from Ectopseudomonas mendocina (strain ymp) (Pseudomonas mendocina).